A 237-amino-acid polypeptide reads, in one-letter code: Ribosomal RNA large subunit methyltransferase E (237 aa).

Positions 80, 82, 108, 124, and 148 each coordinate S-adenosyl-L-methionine. The active-site Proton acceptor is Lys-188.

The protein belongs to the class I-like SAM-binding methyltransferase superfamily. RNA methyltransferase RlmE family.

It is found in the cytoplasm. It carries out the reaction uridine(2552) in 23S rRNA + S-adenosyl-L-methionine = 2'-O-methyluridine(2552) in 23S rRNA + S-adenosyl-L-homocysteine + H(+). Its function is as follows. Specifically methylates the uridine in position 2552 of 23S rRNA at the 2'-O position of the ribose in the fully assembled 50S ribosomal subunit. The polypeptide is Ribosomal RNA large subunit methyltransferase E (Jannaschia sp. (strain CCS1)).